Reading from the N-terminus, the 78-residue chain is Toxin OAIP 5 (78 aa).

An N-terminal signal peptide occupies residues 1 to 19 (MLIVILTCALLVIYHAAAA). The propeptide occupies 20-40 (EELEAKDVIESKALATLDEER). Intrachain disulfides connect Cys43-Cys56, Cys47-Cys70, and Cys64-Cys75.

This sequence belongs to the neurotoxin 12 (Hwtx-2) family. 05 (OAIP-5) subfamily. As to expression, expressed by the venom gland.

Its subcellular location is the secreted. Its function is as follows. Probable ion channel inhibitor. Shows insecticidal activity when injected into mealworms. The sequence is that of Toxin OAIP 5 from Selenotypus plumipes (Australian featherleg tarantula).